The chain runs to 141 residues: Alpha-lactalbumin (141 aa).

An N-terminal signal peptide occupies residues 1–19 (MMSFVSLLVVGILFPAIQA). Positions 20–141 (KQFTKCELSQ…KLDQWLCEKM (122 aa)) constitute a C-type lysozyme domain. 4 cysteine pairs are disulfide-bonded: Cys-25/Cys-138, Cys-47/Cys-129, Cys-80/Cys-95, and Cys-91/Cys-109. Lys-97, Asp-100, Asp-102, Asp-105, and Asp-106 together coordinate Ca(2+).

It belongs to the glycosyl hydrolase 22 family. Lactose synthase (LS) is a heterodimer of a catalytic component, beta1,4-galactosyltransferase (beta4Gal-T1) and a regulatory component, alpha-lactalbumin (LA). As to expression, mammary gland specific. Secreted in milk.

It is found in the secreted. Its function is as follows. Regulatory subunit of lactose synthase, changes the substrate specificity of galactosyltransferase in the mammary gland making glucose a good acceptor substrate for this enzyme. This enables LS to synthesize lactose, the major carbohydrate component of milk. In other tissues, galactosyltransferase transfers galactose onto the N-acetylglucosamine of the oligosaccharide chains in glycoproteins. This chain is Alpha-lactalbumin (LALBA), found in Sus scrofa (Pig).